The primary structure comprises 479 residues: Rifampicin monooxygenase (479 aa).

Residues threonine 12, aspartate 31, lysine 32, arginine 41, glutamine 98, valine 122, threonine 156, aspartate 278, leucine 291, and asparagine 292 each contribute to the FAD site.

Belongs to the rifampicin monooxygenase family. FAD serves as cofactor.

The enzyme catalyses rifampicin + NADPH + O2 = rifampicin para-naphthoquinone carboxamide + NADP(+) + H2O + H(+). It catalyses the reaction rifampicin + NADH + O2 = rifampicin para-naphthoquinone carboxamide + NAD(+) + H2O + H(+). Its function is as follows. Monooxygenase that can modify rifampicin, thereby inactivating its antibiotic activity. This chain is Rifampicin monooxygenase, found in Rhodococcus hoagii (Corynebacterium equii).